Consider the following 396-residue polypeptide: NADH-quinone oxidoreductase subunit D (396 aa).

It belongs to the complex I 49 kDa subunit family. In terms of assembly, NDH-1 is composed of 14 different subunits. Subunits NuoB, C, D, E, F, and G constitute the peripheral sector of the complex.

Its subcellular location is the cell inner membrane. It carries out the reaction a quinone + NADH + 5 H(+)(in) = a quinol + NAD(+) + 4 H(+)(out). Its function is as follows. NDH-1 shuttles electrons from NADH, via FMN and iron-sulfur (Fe-S) centers, to quinones in the respiratory chain. The immediate electron acceptor for the enzyme in this species is believed to be ubiquinone. Couples the redox reaction to proton translocation (for every two electrons transferred, four hydrogen ions are translocated across the cytoplasmic membrane), and thus conserves the redox energy in a proton gradient. The polypeptide is NADH-quinone oxidoreductase subunit D (Brucella anthropi (strain ATCC 49188 / DSM 6882 / CCUG 24695 / JCM 21032 / LMG 3331 / NBRC 15819 / NCTC 12168 / Alc 37) (Ochrobactrum anthropi)).